A 30-amino-acid polypeptide reads, in one-letter code: Root cyclotide 1 (30 aa).

The cyclopeptide (Gly-Asn) cross-link spans 1–30; that stretch reads GIPCAESCVWIPCTVTALLGCSCSNKVCYN. 3 disulfide bridges follow: Cys-4/Cys-21, Cys-8/Cys-23, and Cys-13/Cys-28.

Post-translationally, this is a cyclic peptide. As to expression, expressed in roots.

Functionally, probably participates in a plant defense mechanism. The protein is Root cyclotide 1 of Viola hederacea (Australian violet).